The following is a 346-amino-acid chain: Phosphoribosylformylglycinamidine cyclo-ligase (346 aa).

Belongs to the AIR synthase family.

Its subcellular location is the cytoplasm. It carries out the reaction 2-formamido-N(1)-(5-O-phospho-beta-D-ribosyl)acetamidine + ATP = 5-amino-1-(5-phospho-beta-D-ribosyl)imidazole + ADP + phosphate + H(+). It functions in the pathway purine metabolism; IMP biosynthesis via de novo pathway; 5-amino-1-(5-phospho-D-ribosyl)imidazole from N(2)-formyl-N(1)-(5-phospho-D-ribosyl)glycinamide: step 2/2. The polypeptide is Phosphoribosylformylglycinamidine cyclo-ligase (Shewanella pealeana (strain ATCC 700345 / ANG-SQ1)).